Here is a 317-residue protein sequence, read N- to C-terminus: Olfactory receptor 2G2 (317 aa).

Topologically, residues 1-28 (MGMVRHTNESNLAGFILLGFSDYPQLQK) are extracellular. N-linked (GlcNAc...) asparagine glycosylation is present at asparagine 8. Residues 29 to 52 (VLFVLILILYLLTILGNTTIILVS) form a helical membrane-spanning segment. At 53 to 60 (RLEPKLHM) the chain is on the cytoplasmic side. The helical transmembrane segment at 61 to 82 (PMYFFLSHLSFLYRCFTSSVIP) threads the bilayer. Topologically, residues 83–103 (QLLVNLWEPMKTIAYGGCLVH) are extracellular. Cysteine 100 and cysteine 192 form a disulfide bridge. The chain crosses the membrane as a helical span at residues 104–123 (LYNSHALGSTECVLPAVMSC). Over 124 to 142 (DRYVAVCRPLHYTVLMHIH) the chain is Cytoplasmic. The chain crosses the membrane as a helical span at residues 143 to 161 (LCMALASMAWLSGIATTLV). The Extracellular portion of the chain corresponds to 162 to 198 (QSTLTLQLPFCGHRQVDHFICEVPVLIKLACVGTTFN). The chain crosses the membrane as a helical span at residues 199 to 222 (EAELFVASILFLIVPVSFILVSSG). The Cytoplasmic portion of the chain corresponds to 223 to 239 (YIAHAVLRIKSATRRQK). Residues 240-262 (AFGTCFSHLTVVTIFYGTIIFMY) traverse the membrane as a helical segment. The Extracellular segment spans residues 263–275 (LQPAKSRSRDQGK). Residues 276 to 295 (FVSLFYTVVTRMLNPLIYTL) traverse the membrane as a helical segment. Topologically, residues 296–317 (RIKEVKGALKKVLAKALGVNIL) are cytoplasmic.

It belongs to the G-protein coupled receptor 1 family.

It is found in the cell membrane. Odorant receptor. The chain is Olfactory receptor 2G2 (OR2G2) from Homo sapiens (Human).